Consider the following 1052-residue polypeptide: Membrane-bound transcription factor site-1 protease (1052 aa).

Residues 1 to 17 (MKLINIWLLLLVVLLCG) form the signal peptide. The propeptide occupies 18 to 186 (KKHLGDRLGK…TGRHSSRRLL (169 aa)). Residue asparagine 148 is glycosylated (N-linked (GlcNAc...) asparagine). Residue serine 168 is modified to Phosphoserine. At 187–999 (RAIPRQVAQT…MPGRYNQEVG (813 aa)) the chain is on the lumenal side. Positions 190–472 (PRQVAQTLQA…HGKLDLLRAY (283 aa)) constitute a Peptidase S8 domain. Residue aspartate 218 is the Charge relay system of the active site. Residue asparagine 236 is glycosylated (N-linked (GlcNAc...) asparagine). The active-site Charge relay system is the histidine 249. A glycan (N-linked (GlcNAc...) asparagine) is linked at asparagine 305. Catalysis depends on serine 414, which acts as the Charge relay system. Residues asparagine 515 and asparagine 728 are each glycosylated (N-linked (GlcNAc...) asparagine). Polar residues predominate over residues 877–887 (PSLSHSGNRQR). The segment at 877–900 (PSLSHSGNRQRPPSGAGLAPPERM) is disordered. An N-linked (GlcNAc...) asparagine glycan is attached at asparagine 939. Residues 1000-1022 (QTIPVFAFLGAMVALAFFVVQIS) traverse the membrane as a helical segment. At 1023 to 1052 (KAKSRPKRRRPRAKRPQLTQQTHPPRTPSV) the chain is on the cytoplasmic side. The segment covering 1025 to 1037 (KSRPKRRRPRAKR) has biased composition (basic residues). The tract at residues 1025-1052 (KSRPKRRRPRAKRPQLTQQTHPPRTPSV) is disordered.

It belongs to the peptidase S8 family. Ca(2+) serves as cofactor. In terms of processing, the 148 kDa zymogen is processed progressively into two membrane-bound 120 and 106 kDa forms in the endoplasmic reticulum, and late into a secreted 98 kDa form. The propeptide is autocatalytically removed through an intramolecular cleavage after Leu-186. Further cleavage generates 14, 10, and 8 kDa intermediates.

It is found in the endoplasmic reticulum membrane. Its subcellular location is the golgi apparatus membrane. It catalyses the reaction Processes precursors containing basic and hydrophobic/aliphatic residues at P4 and P2, respectively, with a relatively relaxed acceptance of amino acids at P1 and P3.. Its activity is regulated as follows. Inhibited by divalent copper and zinc ions, but not by nickel or cobalt. Inhibited by its prosegment, but not smaller fragments. Inhibited by 4-(2-aminoethyl)benzenesulfonyl fluoride (AEBSF), a serine protease inhibitor. In terms of biological role, serine protease that cleaves after hydrophobic or small residues, provided that Arg or Lys is in position P4: known substrates include SREBF1/SREBP1, SREBF2/SREBP2, BDNF, GNPTAB, ATF6, ATF6B and FAM20C. Cleaves substrates after Arg-Ser-Val-Leu (SREBP2), Arg-His-Leu-Leu (ATF6), Arg-Gly-Leu-Thr (BDNF) and its own propeptide after Arg-Arg-Leu-Leu. Catalyzes the first step in the proteolytic activation of the sterol regulatory element-binding proteins (SREBPs) SREBF1/SREBP1 and SREBF2/SREBP2. Also mediates the first step in the proteolytic activation of the cyclic AMP-dependent transcription factor ATF-6 (ATF6 and ATF6B). Mediates the protein cleavage of GNPTAB into subunit alpha and beta, thereby participating in biogenesis of lysosomes. Cleaves the propeptide from FAM20C which is required for FAM20C secretion from the Golgi apparatus membrane and for enhancement of FAM20C kinase activity, promoting osteoblast differentiation and biomineralization. Involved in the regulation of M6P-dependent Golgi-to-lysosome trafficking of lysosomal enzymes. It is required for the activation of CREB3L2/BBF2H7, a transcriptional activator of MIA3/TANGO and other genes controlling mega vesicle formation. Therefore, it plays a key role in the regulation of mega vesicle-mediated collagen trafficking. In astrocytes and osteoblasts, upon DNA damage and ER stress, mediates the first step of the regulated intramembrane proteolytic activation of the transcription factor CREB3L1, leading to the inhibition of cell-cycle progression. This is Membrane-bound transcription factor site-1 protease from Cricetulus griseus (Chinese hamster).